The primary structure comprises 129 residues: Small ribosomal subunit protein uS11 (129 aa).

This sequence belongs to the universal ribosomal protein uS11 family. As to quaternary structure, part of the 30S ribosomal subunit. Interacts with proteins S7 and S18. Binds to IF-3.

Located on the platform of the 30S subunit, it bridges several disparate RNA helices of the 16S rRNA. Forms part of the Shine-Dalgarno cleft in the 70S ribosome. This Aromatoleum aromaticum (strain DSM 19018 / LMG 30748 / EbN1) (Azoarcus sp. (strain EbN1)) protein is Small ribosomal subunit protein uS11.